We begin with the raw amino-acid sequence, 152 residues long: AIG2-like protein D (152 aa).

Residue 13-18 (YGSLMA) coordinates substrate. The active-site Proton acceptor is the Glu81.

This sequence belongs to the gamma-glutamylcyclotransferase family. In terms of tissue distribution, expressed mainly in leaves.

Its function is as follows. Putative gamma-glutamylcyclotransferase. The polypeptide is AIG2-like protein D (Arabidopsis thaliana (Mouse-ear cress)).